Reading from the N-terminus, the 947-residue chain is Protein NLP8 (947 aa).

Disordered regions lie at residues 114–135 (RSSAQEMNSQFHRSSDSDELSG), 509–533 (STKKEGTKPGFRSSDMSNFPQTTSS), and 550–591 (SMFS…EKNV). A compositionally biased stretch (basic and acidic residues) spans 126 to 135 (RSSDSDELSG). Composition is skewed to polar residues over residues 522–533 (SDMSNFPQTTSS) and 550–572 (SMFSGMSSDKENSITVSQGTLEQ). Over residues 573-587 (DVSKARTPEKKKSTT) the composition is skewed to basic and acidic residues. One can recognise an RWP-RK domain in the interval 577–671 (ARTPEKKKST…LDSVQGVEGG (95 aa)). The stretch at 646 to 666 (RKINKVNRSLRKIQTVLDSVQ) forms a coiled coil. The segment covering 805–815 (SCSISDSSNGS) has biased composition (low complexity). A disordered region spans residues 805-828 (SCSISDSSNGSGAVLRGSSSTSME). Residues 847–929 (TLIVKASYRE…HSVKFLVRDL (83 aa)) enclose the PB1 domain.

The protein localises to the nucleus. Functionally, probable transcription factor. The protein is Protein NLP8 (NLP8) of Arabidopsis thaliana (Mouse-ear cress).